The chain runs to 455 residues: Alcohol acyl transferase 1 allele RGb (455 aa).

Active-site proton acceptor residues include His-164 and Asn-385.

It belongs to the plant acyltransferase family.

Its function is as follows. Involved in the biosynthesis of volatile esters which confer ripe apple fruit flavor. Alcohol acyl transferase that can use a wide range of alcohols as substrate to produce esters. The polypeptide is Alcohol acyl transferase 1 allele RGb (Malus domestica (Apple)).